A 591-amino-acid polypeptide reads, in one-letter code: Aspartate--tRNA(Asp/Asn) ligase (591 aa).

E176 is an L-aspartate binding site. The interval Q200 to K203 is aspartate. R222 serves as a coordination point for L-aspartate. ATP contacts are provided by residues R222 to E224 and Q231. H450 lines the L-aspartate pocket. E484 contributes to the ATP binding site. R491 serves as a coordination point for L-aspartate. G536–R539 is a binding site for ATP.

The protein belongs to the class-II aminoacyl-tRNA synthetase family. Type 1 subfamily. In terms of assembly, homodimer.

It is found in the cytoplasm. It catalyses the reaction tRNA(Asx) + L-aspartate + ATP = L-aspartyl-tRNA(Asx) + AMP + diphosphate. Its function is as follows. Aspartyl-tRNA synthetase with relaxed tRNA specificity since it is able to aspartylate not only its cognate tRNA(Asp) but also tRNA(Asn). Reaction proceeds in two steps: L-aspartate is first activated by ATP to form Asp-AMP and then transferred to the acceptor end of tRNA(Asp/Asn). The polypeptide is Aspartate--tRNA(Asp/Asn) ligase (Bacillus cereus (strain G9842)).